A 74-amino-acid polypeptide reads, in one-letter code: UPF0154 protein LSL_0542 (74 aa).

The chain crosses the membrane as a helical span at residues 5–25 (IWVLIVIIAAVLGFVGGFFAA).

Belongs to the UPF0154 family.

It is found in the cell membrane. This chain is UPF0154 protein LSL_0542, found in Ligilactobacillus salivarius (strain UCC118) (Lactobacillus salivarius).